Consider the following 274-residue polypeptide: MDAEIFSLDSLSIYKDINIASAKPSLKERKNIKHYALDHLNIDEKNNAQLFKTLLEDAMRVSSKEILLIVGGSSFYLKSILEGLSDTPKISGEEVVKIEREISALANPYAFLKSIDPTIAFKIHPNDTYRIHKALEIFYLTHMPPSEYFKANPKKPFEHAISLFALHIEKNALHNNIKQRTKNMLHSGLVEEIKALYAKYPKDSQPFKAIGVKESVLFLEKQLTLKELEGAITFNPIKLAKRQNTFNKTQFNILYTGSVKEVRHAILKHSKSAY.

The tract at residues 9–12 is interaction with substrate tRNA; it reads DSLS.

The protein belongs to the IPP transferase family. In terms of assembly, monomer. Requires Mg(2+) as cofactor.

The catalysed reaction is adenosine(37) in tRNA + dimethylallyl diphosphate = N(6)-dimethylallyladenosine(37) in tRNA + diphosphate. In terms of biological role, catalyzes the transfer of a dimethylallyl group onto the adenine at position 37 in tRNAs that read codons beginning with uridine, leading to the formation of N6-(dimethylallyl)adenosine (i(6)A). In Helicobacter pylori (strain P12), this protein is tRNA dimethylallyltransferase (miaA).